A 106-amino-acid polypeptide reads, in one-letter code: Photosystem II 5 kDa protein, chloroplastic (106 aa).

Residues 1 to 76 (MASITMMSSF…ACSVAKTAMA (76 aa)) constitute a chloroplast transit peptide. C95 and C104 are oxidised to a cystine.

Disulfide bond. In terms of tissue distribution, expressed in midvein, lamina and periphery of leaves (at protein level).

It is found in the plastid. Its subcellular location is the chloroplast thylakoid membrane. Functionally, may be a component of the oxygen-evolving complex. In Petunia hybrida (Petunia), this protein is Photosystem II 5 kDa protein, chloroplastic.